The sequence spans 482 residues: tRNA sulfurtransferase (482 aa).

Positions 61-165 constitute a THUMP domain; sequence LTIRDALTRI…DDRLLLIKGR (105 aa). Residues 183 to 184, Lys-265, Gly-287, and Gln-296 each bind ATP; that span reads LI. Cys-344 and Cys-456 are joined by a disulfide. In terms of domain architecture, Rhodanese spans 404–482; that stretch reads FGPNDVILDI…GFKNVKVYRP (79 aa). Catalysis depends on Cys-456, which acts as the Cysteine persulfide intermediate.

It belongs to the ThiI family. In terms of assembly, interacts with IscS.

The protein localises to the cytoplasm. It carries out the reaction [ThiI sulfur-carrier protein]-S-sulfanyl-L-cysteine + a uridine in tRNA + 2 reduced [2Fe-2S]-[ferredoxin] + ATP + H(+) = [ThiI sulfur-carrier protein]-L-cysteine + a 4-thiouridine in tRNA + 2 oxidized [2Fe-2S]-[ferredoxin] + AMP + diphosphate. The enzyme catalyses [ThiS sulfur-carrier protein]-C-terminal Gly-Gly-AMP + S-sulfanyl-L-cysteinyl-[cysteine desulfurase] + AH2 = [ThiS sulfur-carrier protein]-C-terminal-Gly-aminoethanethioate + L-cysteinyl-[cysteine desulfurase] + A + AMP + 2 H(+). The protein operates within cofactor biosynthesis; thiamine diphosphate biosynthesis. Catalyzes the ATP-dependent transfer of a sulfur to tRNA to produce 4-thiouridine in position 8 of tRNAs, which functions as a near-UV photosensor. Also catalyzes the transfer of sulfur to the sulfur carrier protein ThiS, forming ThiS-thiocarboxylate. This is a step in the synthesis of thiazole, in the thiamine biosynthesis pathway. The sulfur is donated as persulfide by IscS. The polypeptide is tRNA sulfurtransferase (Escherichia coli O157:H7).